The primary structure comprises 338 residues: Heme-dependent oxidative N-demethylase alpha subunit (338 aa).

Residues tyrosine 38 and histidine 194 each contribute to the heme b site. Catalysis depends on arginine 224, which acts as the Proton donor. Asparagine 226 is a binding site for heme b. Position 266 (glutamate 266) interacts with dimethylamine. 2 residues coordinate heme b: tyrosine 317 and lysine 318.

The heme-dependent oxidative N-demethylase (HODM) is a heterotetramer composed of a catalytic alpha subunit, a FMN/2Fe-2S-dependent oxidoreductase beta subunit, a gamma subunit with putative aminotransferase activity, and a delta subunit of unknown function.

The catalysed reaction is dimethylamine + NADPH + O2 + H(+) = methylamine + formaldehyde + NADP(+) + H2O. Component of the heme-dependent oxidative N-demethylase (HODM) enzyme, that catalyzes the NADPH-dependent oxidation of dimethylamine (DMA) to methylamine (MA) and formaldehyde. Functions in bacterial methylated amine catabolism, linking alkylamine oxidation to the tetrahydrofolate C1 pool. The alpha subunit of HODM binds heme, oxygen and DMA, and serves as the site of the oxidative N-demethylase activity. The sequence is that of Heme-dependent oxidative N-demethylase alpha subunit from Ectopseudomonas mendocina (strain ymp) (Pseudomonas mendocina).